Reading from the N-terminus, the 99-residue chain is Acylphosphatase (99 aa).

One can recognise an Acylphosphatase-like domain in the interval 14–99; it reads AVDVTVTGRV…DQGLRSFGVR (86 aa). Catalysis depends on residues Arg-29 and Asn-47.

The protein belongs to the acylphosphatase family.

The enzyme catalyses an acyl phosphate + H2O = a carboxylate + phosphate + H(+). This Nocardioides sp. (strain ATCC BAA-499 / JS614) protein is Acylphosphatase (acyP).